A 281-amino-acid chain; its full sequence is Acetyl-coenzyme A carboxylase carboxyl transferase subunit beta (281 aa).

Residues 24 to 281 (GLWYKSPKGK…TKLLTMLANN (258 aa)) form the CoA carboxyltransferase N-terminal domain.

Belongs to the AccD/PCCB family. In terms of assembly, acetyl-CoA carboxylase is a heterohexamer composed of biotin carboxyl carrier protein (AccB), biotin carboxylase (AccC) and two subunits each of ACCase subunit alpha (AccA) and ACCase subunit beta (AccD).

Its subcellular location is the cytoplasm. The enzyme catalyses N(6)-carboxybiotinyl-L-lysyl-[protein] + acetyl-CoA = N(6)-biotinyl-L-lysyl-[protein] + malonyl-CoA. It participates in lipid metabolism; malonyl-CoA biosynthesis; malonyl-CoA from acetyl-CoA: step 1/1. In terms of biological role, component of the acetyl coenzyme A carboxylase (ACC) complex. Biotin carboxylase (BC) catalyzes the carboxylation of biotin on its carrier protein (BCCP) and then the CO(2) group is transferred by the transcarboxylase to acetyl-CoA to form malonyl-CoA. The polypeptide is Acetyl-coenzyme A carboxylase carboxyl transferase subunit beta (Amoebophilus asiaticus (strain 5a2)).